The chain runs to 200 residues: MTTTVGIAVKEGVVLATDKRVTAGYYIAHKQGEKIWKIDDHVAATMSGGVADLQSLLSFLTLRAREYKIEYKRPIPIRALVNYVSLILFYSRPYIYLVHSIIGGVDREEGAVLYMVDWLGTVTRERYIATGSGSPYAKGALEVGYREDMSLEDAVDLAIRSVKAAIRNDPGSGEGIDVVVITKEGFRRVFTAQQKIIITE.

A propeptide (removed in mature form; by autocatalysis) is located at residue Met1. The Nucleophile role is filled by Thr2.

It belongs to the peptidase T1B family. The 20S proteasome core is composed of 14 alpha and 14 beta subunits that assemble into four stacked heptameric rings, resulting in a barrel-shaped structure. The two inner rings, each composed of seven catalytic beta subunits, are sandwiched by two outer rings, each composed of seven alpha subunits. The catalytic chamber with the active sites is on the inside of the barrel. Has a gated structure, the ends of the cylinder being occluded by the N-termini of the alpha-subunits. Is capped at one or both ends by the proteasome regulatory ATPase, PAN.

The protein resides in the cytoplasm. It catalyses the reaction Cleavage of peptide bonds with very broad specificity.. With respect to regulation, the formation of the proteasomal ATPase PAN-20S proteasome complex, via the docking of the C-termini of PAN into the intersubunit pockets in the alpha-rings, triggers opening of the gate for substrate entry. Interconversion between the open-gate and close-gate conformations leads to a dynamic regulation of the 20S proteasome proteolysis activity. In terms of biological role, component of the proteasome core, a large protease complex with broad specificity involved in protein degradation. The protein is Proteasome subunit beta 2 of Pyrobaculum islandicum (strain DSM 4184 / JCM 9189 / GEO3).